The sequence spans 270 residues: Regulatory protein RecX (270 aa).

The protein belongs to the RecX family.

It is found in the cytoplasm. Its function is as follows. Modulates RecA activity. This is Regulatory protein RecX from Bacillus cereus (strain G9842).